The chain runs to 183 residues: Early E3 20.2 kDa glycoprotein (183 aa).

Asparagine 30, asparagine 73, asparagine 117, asparagine 134, and asparagine 135 each carry an N-linked (GlcNAc...) asparagine; by host glycan.

It belongs to the adenoviridae E3_20 family.

The chain is Early E3 20.2 kDa glycoprotein from Homo sapiens (Human).